A 288-amino-acid chain; its full sequence is MASEKQKQHAQPGKEHVMESSPQFSSSDYQPSNKLRGKVALITGGDSGIGRAVGYCFASEGATVAFTYVKGQEEKDAQETLQMLKEVKTSDSKEPIAIPTDLGFDENCKRVVDEVVNAFGRIDVLINNAAEQYESSTIEEIDEPRLERVFRTNIFSYFFLTRHALKHMKEGSSIINTTSVNAYKGNASLLDYTATKGAIVAFTRGLALQLAEKGIRVNGVAPGPIWTPLIPASFNEEKIKNFGSEVPMKRAGQPIEVAPSYVFLACNHCSSYFTGQVLHPNGGAVVNA.

Over residues 1-18 (MASEKQKQHAQPGKEHVM) the composition is skewed to basic and acidic residues. Residues 1 to 32 (MASEKQKQHAQPGKEHVMESSPQFSSSDYQPS) form a disordered region. Over residues 20 to 32 (SSPQFSSSDYQPS) the composition is skewed to polar residues. Residue 47-71 (SGIGRAVGYCFASEGATVAFTYVKG) participates in NADP(+) binding. Substrate is bound at residue serine 179. Catalysis depends on tyrosine 192, which acts as the Proton acceptor.

Belongs to the short-chain dehydrogenases/reductases (SDR) family.

The protein localises to the plastid. It is found in the chloroplast. Aldehyde reductase that catalyzes the reduction of the aldehyde carbonyl groups on saturated and alpha,beta-unsaturated aldehydes with more than 5 carbons. No activity on alpha,beta-unsaturated ketones. Can use propionaldehyde, butyraldehyde, methylglyoxal, (e)-2-pentenal, (E)-2-hexenal, (Z)-3-hexenal and (E)-2-nonenal as substrates, but not propenal (acrolein), crotonaldehyde, 2-butanone, 3-buten-2-one or 1-penten-3-one. May act as a short alcohol-polyol-sugar dehydrogenase possibly related to carbohydrate metabolism and the acquisition of desiccation tolerance. May also be involved in signal transduction. This Arabidopsis thaliana (Mouse-ear cress) protein is NADPH-dependent aldehyde reductase 1, chloroplastic.